Here is a 910-residue protein sequence, read N- to C-terminus: DnaJ-like protein MG200 homolog (910 aa).

Positions 4 to 73 constitute a J domain; that stretch reads AKRDYYEVLG…RANYDKYGHD (70 aa). Disordered regions lie at residues 102 to 160, 260 to 408, and 451 to 486; these read DNLS…DDIP, TEPS…LEQD, and VLSDQNPNPQTPTHHEEDAAAPEPTVDETSGESTAP. Positions 111-121 are enriched in basic residues; that stretch reads KKEKTKTKKKG. Low complexity predominate over residues 273–283; that stretch reads DSDAVTAATTV. The segment covering 357–379 has biased composition (acidic residues); sequence SDEADATNEPTEQDTISEPEQET. Over residues 451–462 the composition is skewed to polar residues; it reads VLSDQNPNPQTP.

In Mycoplasma pneumoniae (strain ATCC 29342 / M129 / Subtype 1) (Mycoplasmoides pneumoniae), this protein is DnaJ-like protein MG200 homolog.